We begin with the raw amino-acid sequence, 1080 residues long: Carbamoyl phosphate synthase large chain (1080 aa).

The tract at residues 1-403 (MPKRTDLRTI…SLQKAVRGLE (403 aa)) is carboxyphosphate synthetic domain. 12 residues coordinate ATP: Arg-129, Arg-169, Gly-175, Gly-176, Glu-208, Val-210, Glu-215, Gly-241, Val-242, His-243, Gln-285, and Glu-299. One can recognise an ATP-grasp 1 domain in the interval 133–328 (RVAMQEIGLE…IAKIAAKLAV (196 aa)). Mg(2+) contacts are provided by Gln-285, Glu-299, and Asn-301. Mn(2+) contacts are provided by Gln-285, Glu-299, and Asn-301. The segment at 404 to 554 (TGKVGLEPTG…YSTYEEECEA (151 aa)) is oligomerization domain. The interval 555–942 (APSDRRKIMI…AFARAQEAGD (388 aa)) is carbamoyl phosphate synthetic domain. Residues 679–876 (QRLVQQLGLR…LAKIAARCMT (198 aa)) form the ATP-grasp 2 domain. Residues Arg-715, Arg-754, Leu-756, Glu-761, Gly-787, Val-788, His-789, Ser-790, Gln-830, and Glu-847 each coordinate ATP. Positions 830, 847, and 849 each coordinate Mg(2+). The Mn(2+) site is built by Gln-830, Glu-847, and Asn-849. The MGS-like domain maps to 943–1080 (IRAPQPGRAF…LQELHKELQV (138 aa)). The allosteric domain stretch occupies residues 943 to 1080 (IRAPQPGRAF…LQELHKELQV (138 aa)).

It belongs to the CarB family. In terms of assembly, composed of two chains; the small (or glutamine) chain promotes the hydrolysis of glutamine to ammonia, which is used by the large (or ammonia) chain to synthesize carbamoyl phosphate. Tetramer of heterodimers (alpha,beta)4. Requires Mg(2+) as cofactor. Mn(2+) is required as a cofactor.

It catalyses the reaction hydrogencarbonate + L-glutamine + 2 ATP + H2O = carbamoyl phosphate + L-glutamate + 2 ADP + phosphate + 2 H(+). It carries out the reaction hydrogencarbonate + NH4(+) + 2 ATP = carbamoyl phosphate + 2 ADP + phosphate + 2 H(+). Its pathway is amino-acid biosynthesis; L-arginine biosynthesis; carbamoyl phosphate from bicarbonate: step 1/1. It participates in pyrimidine metabolism; UMP biosynthesis via de novo pathway; (S)-dihydroorotate from bicarbonate: step 1/3. Its function is as follows. Large subunit of the glutamine-dependent carbamoyl phosphate synthetase (CPSase). CPSase catalyzes the formation of carbamoyl phosphate from the ammonia moiety of glutamine, carbonate, and phosphate donated by ATP, constituting the first step of 2 biosynthetic pathways, one leading to arginine and/or urea and the other to pyrimidine nucleotides. The large subunit (synthetase) binds the substrates ammonia (free or transferred from glutamine from the small subunit), hydrogencarbonate and ATP and carries out an ATP-coupled ligase reaction, activating hydrogencarbonate by forming carboxy phosphate which reacts with ammonia to form carbamoyl phosphate. This is Carbamoyl phosphate synthase large chain from Xylella fastidiosa (strain Temecula1 / ATCC 700964).